Here is a 612-residue protein sequence, read N- to C-terminus: Dihydroxy-acid dehydratase (612 aa).

D81 contributes to the Mg(2+) binding site. C122 is a binding site for [2Fe-2S] cluster. Mg(2+)-binding residues include D123 and K124. K124 carries the post-translational modification N6-carboxylysine. C195 contributes to the [2Fe-2S] cluster binding site. E491 provides a ligand contact to Mg(2+). Catalysis depends on S517, which acts as the Proton acceptor.

It belongs to the IlvD/Edd family. Homodimer. The cofactor is [2Fe-2S] cluster. It depends on Mg(2+) as a cofactor.

The enzyme catalyses (2R)-2,3-dihydroxy-3-methylbutanoate = 3-methyl-2-oxobutanoate + H2O. It catalyses the reaction (2R,3R)-2,3-dihydroxy-3-methylpentanoate = (S)-3-methyl-2-oxopentanoate + H2O. It participates in amino-acid biosynthesis; L-isoleucine biosynthesis; L-isoleucine from 2-oxobutanoate: step 3/4. It functions in the pathway amino-acid biosynthesis; L-valine biosynthesis; L-valine from pyruvate: step 3/4. Functionally, functions in the biosynthesis of branched-chain amino acids. Catalyzes the dehydration of (2R,3R)-2,3-dihydroxy-3-methylpentanoate (2,3-dihydroxy-3-methylvalerate) into 2-oxo-3-methylpentanoate (2-oxo-3-methylvalerate) and of (2R)-2,3-dihydroxy-3-methylbutanoate (2,3-dihydroxyisovalerate) into 2-oxo-3-methylbutanoate (2-oxoisovalerate), the penultimate precursor to L-isoleucine and L-valine, respectively. In Haemophilus influenzae (strain PittEE), this protein is Dihydroxy-acid dehydratase.